Reading from the N-terminus, the 169-residue chain is Phosphopantetheine adenylyltransferase (169 aa).

Substrate is bound at residue Ser-10. Residues 10–11 and His-18 contribute to the ATP site; that span reads SF. Residues Lys-42, Leu-74, and Arg-88 each coordinate substrate. ATP is bound by residues 89 to 91, Glu-99, and 124 to 130; these read GLR and YAFLSSS.

Belongs to the bacterial CoaD family. As to quaternary structure, homohexamer. Mg(2+) serves as cofactor.

The protein resides in the cytoplasm. The enzyme catalyses (R)-4'-phosphopantetheine + ATP + H(+) = 3'-dephospho-CoA + diphosphate. It participates in cofactor biosynthesis; coenzyme A biosynthesis; CoA from (R)-pantothenate: step 4/5. Functionally, reversibly transfers an adenylyl group from ATP to 4'-phosphopantetheine, yielding dephospho-CoA (dPCoA) and pyrophosphate. This is Phosphopantetheine adenylyltransferase from Geobacillus sp. (strain WCH70).